The sequence spans 162 residues: Small ribosomal subunit protein uS13 (162 aa).

The disordered stretch occupies residues 142–162; the sequence is RGQRTKSTGRRGSTVGVSRKK.

Belongs to the universal ribosomal protein uS13 family. As to quaternary structure, part of the 30S ribosomal subunit. Forms a loose heterodimer with protein S19. Forms two bridges to the 50S subunit in the 70S ribosome.

Its function is as follows. Located at the top of the head of the 30S subunit, it contacts several helices of the 16S rRNA. In the 70S ribosome it contacts the 23S rRNA (bridge B1a) and protein L5 of the 50S subunit (bridge B1b), connecting the 2 subunits; these bridges are implicated in subunit movement. The chain is Small ribosomal subunit protein uS13 from Methanosarcina mazei (strain ATCC BAA-159 / DSM 3647 / Goe1 / Go1 / JCM 11833 / OCM 88) (Methanosarcina frisia).